Consider the following 417-residue polypeptide: NADH-quinone oxidoreductase subunit D (417 aa).

The protein belongs to the complex I 49 kDa subunit family. In terms of assembly, NDH-1 is composed of 14 different subunits. Subunits NuoB, C, D, E, F, and G constitute the peripheral sector of the complex.

The protein localises to the cell inner membrane. The catalysed reaction is a quinone + NADH + 5 H(+)(in) = a quinol + NAD(+) + 4 H(+)(out). Its function is as follows. NDH-1 shuttles electrons from NADH, via FMN and iron-sulfur (Fe-S) centers, to quinones in the respiratory chain. The immediate electron acceptor for the enzyme in this species is believed to be ubiquinone. Couples the redox reaction to proton translocation (for every two electrons transferred, four hydrogen ions are translocated across the cytoplasmic membrane), and thus conserves the redox energy in a proton gradient. In Herminiimonas arsenicoxydans, this protein is NADH-quinone oxidoreductase subunit D.